A 348-amino-acid polypeptide reads, in one-letter code: Phosphate acyltransferase (348 aa).

This sequence belongs to the PlsX family. In terms of assembly, homodimer. Probably interacts with PlsY.

The protein localises to the cytoplasm. It carries out the reaction a fatty acyl-[ACP] + phosphate = an acyl phosphate + holo-[ACP]. It participates in lipid metabolism; phospholipid metabolism. Its function is as follows. Catalyzes the reversible formation of acyl-phosphate (acyl-PO(4)) from acyl-[acyl-carrier-protein] (acyl-ACP). This enzyme utilizes acyl-ACP as fatty acyl donor, but not acyl-CoA. This chain is Phosphate acyltransferase, found in Pectobacterium carotovorum subsp. carotovorum (strain PC1).